A 226-amino-acid polypeptide reads, in one-letter code: Octanoyltransferase (226 aa).

Positions 31 to 226 (PETPDALWIC…SQKLGTYLAP (196 aa)) constitute a BPL/LPL catalytic domain. Substrate is bound by residues 70 to 77 (RGGQVTFH), 159 to 161 (ALG), and 172 to 174 (GVA). C190 functions as the Acyl-thioester intermediate in the catalytic mechanism.

It belongs to the LipB family.

It localises to the cytoplasm. It carries out the reaction octanoyl-[ACP] + L-lysyl-[protein] = N(6)-octanoyl-L-lysyl-[protein] + holo-[ACP] + H(+). It functions in the pathway protein modification; protein lipoylation via endogenous pathway; protein N(6)-(lipoyl)lysine from octanoyl-[acyl-carrier-protein]: step 1/2. In terms of biological role, catalyzes the transfer of endogenously produced octanoic acid from octanoyl-acyl-carrier-protein onto the lipoyl domains of lipoate-dependent enzymes. Lipoyl-ACP can also act as a substrate although octanoyl-ACP is likely to be the physiological substrate. This is Octanoyltransferase from Variovorax paradoxus (strain S110).